The sequence spans 547 residues: Rho GTPase-activating protein 36 (547 aa).

The signal sequence occupies residues 1–40 (MGGCNPFLKAARTLCPRIMPPLLFLSAFIFLVNVLGGAPG). The Rho-GAP domain occupies 226-426 (MSLNPIAKQI…AMIDNWDILF (201 aa)). A disordered region spans residues 493–547 (FDEGSSEEPAVPPGTAHSHDDEEGAGNPPIPEQDRPLLRVPREKQAKTGIGYFFP). Over residues 524-538 (EQDRPLLRVPREKQA) the composition is skewed to basic and acidic residues.

GTPase activator for the Rho-type GTPases by converting them to an inactive GDP-bound state. This chain is Rho GTPase-activating protein 36 (ARHGAP36), found in Ailuropoda melanoleuca (Giant panda).